A 1181-amino-acid chain; its full sequence is Lysine-specific demethylase hairless (1181 aa).

The segment covering 311–323 (TPRCPSPGPPTPP) has biased composition (pro residues). Disordered stretches follow at residues 311 to 378 (TPRC…HTKL), 413 to 472 (AGSP…DGRI), and 509 to 543 (SHSQKSHKLPLEEKPLEEDSCATSEEGGGSSPEAS). Residues 347-357 (SPEGSSSGPGE) show a composition bias toward low complexity. Polar residues predominate over residues 447-461 (TPETSTGSKAEAQQQ). Residues 462 to 472 (EEQRGPRDGRI) show a composition bias toward basic and acidic residues. An LXXLL motif 1 motif is present at residues 560–564 (LCRLL). The segment at 594–619 (CSRCHHGLFNTHWRCSHCSHRLCVAC) adopts a C6-type zinc-finger fold. The disordered stretch occupies residues 696-745 (GDGGQQKEPTEKTPPAPQLSCNGDSNRTKDIKEETPDSTESPAEDRAGRS). The span at 721-730 (NRTKDIKEET) shows a compositional bias: basic and acidic residues. The LXXLL motif 2 signature appears at 752-756 (LCELL). The JmjC domain occupies 938 to 1149 (DESRVENLAS…LSAQLCHQGA (212 aa)). Residues cysteine 999, glutamate 1001, and histidine 1117 each contribute to the Fe cation site.

It depends on Fe(2+) as a cofactor.

It is found in the nucleus. It carries out the reaction N(6),N(6)-dimethyl-L-lysyl(9)-[histone H3] + 2 2-oxoglutarate + 2 O2 = L-lysyl(9)-[histone H3] + 2 formaldehyde + 2 succinate + 2 CO2. Its function is as follows. Histone demethylase that specifically demethylates both mono- and dimethylated 'Lys-9' of histone H3. May act as a transcription regulator controlling hair biology (via targeting of collagens), neural activity, and cell cycle. This Rattus norvegicus (Rat) protein is Lysine-specific demethylase hairless (Hr).